Consider the following 241-residue polypeptide: Phycocyanobilin:ferredoxin oxidoreductase (241 aa).

Belongs to the HY2 family.

The catalysed reaction is (2R,3Z)-phycocyanobilin + 4 oxidized [2Fe-2S]-[ferredoxin] = biliverdin IXalpha + 4 reduced [2Fe-2S]-[ferredoxin] + 4 H(+). Its function is as follows. Catalyzes the four-electron reduction of biliverdin IX-alpha (2-electron reduction at both the A and D rings); the reaction proceeds via an isolatable 2-electron intermediate, 181,182-dihydrobiliverdin. This Prochlorococcus marinus (strain MIT 9215) protein is Phycocyanobilin:ferredoxin oxidoreductase.